The primary structure comprises 473 residues: MSAKTYNAGVKEYRHTYWEPHYNVQDTDILACFKIVPQPGVDREEAAAAVAAESSTGTWTTVWTDLLTDLDYYKGRSYRIEDVPGDDSSFYAFIAYPIDLFEEGSVVNVLTSLTGNVFGFKAVRSLRLEDVRFPIAYVKTCGGPPNGIQVERDILNKYGRAYLGCTIKPKLGLSAKNYGRAVYECLRGGLDFTKDDENVNSQPFMRWRQRFDFVMEAIHKAERETGERKGHYLNVTAPTPEEMFKRAEYAKELKAPIIMHDYIAGGFCANTGLANWCRDNGILLHIHRAMHAVIDRNPHHGIHFRVLAKMLRLSGGDHLHSGTVVGKLEGDREATLGWIDIMRDSFIKEDRSRGIMFDQDWGSMPGVVPVASGGIHVWHMPALVTIFGDDACLQFGGGTLGHPWGNAAGAAANRVALEACVEARNRGVPIEKEGKAILTEAAKHSPELKIAMETWKEIKFEFDTVDKLDVAHK.

Substrate contacts are provided by Asn116 and Thr166. Lys168 acts as the Proton acceptor in catalysis. Residue Lys170 coordinates substrate. Residues Lys194, Asp196, and Glu197 each coordinate Mg(2+). Lys194 carries the N6-carboxylysine modification. The active-site Proton acceptor is His287. Arg288, His320, and Ser372 together coordinate substrate.

This sequence belongs to the RuBisCO large chain family. Type I subfamily. As to quaternary structure, heterohexadecamer of 8 large chains and 8 small chains. It depends on Mg(2+) as a cofactor.

It carries out the reaction 2 (2R)-3-phosphoglycerate + 2 H(+) = D-ribulose 1,5-bisphosphate + CO2 + H2O. It catalyses the reaction D-ribulose 1,5-bisphosphate + O2 = 2-phosphoglycolate + (2R)-3-phosphoglycerate + 2 H(+). RuBisCO catalyzes two reactions: the carboxylation of D-ribulose 1,5-bisphosphate, the primary event in carbon dioxide fixation, as well as the oxidative fragmentation of the pentose substrate. Both reactions occur simultaneously and in competition at the same active site. This is Ribulose bisphosphate carboxylase large chain from Nitrosomonas europaea (strain ATCC 19718 / CIP 103999 / KCTC 2705 / NBRC 14298).